The chain runs to 132 residues: Phosphoribosyl-AMP cyclohydrolase (132 aa).

Residue Asp78 participates in Mg(2+) binding. Cys79 provides a ligand contact to Zn(2+). The Mg(2+) site is built by Asp80 and Asp82. Residues Cys96 and Cys103 each coordinate Zn(2+).

Belongs to the PRA-CH family. In terms of assembly, homodimer. Mg(2+) serves as cofactor. The cofactor is Zn(2+).

Its subcellular location is the cytoplasm. It carries out the reaction 1-(5-phospho-beta-D-ribosyl)-5'-AMP + H2O = 1-(5-phospho-beta-D-ribosyl)-5-[(5-phospho-beta-D-ribosylamino)methylideneamino]imidazole-4-carboxamide. Its pathway is amino-acid biosynthesis; L-histidine biosynthesis; L-histidine from 5-phospho-alpha-D-ribose 1-diphosphate: step 3/9. Its function is as follows. Catalyzes the hydrolysis of the adenine ring of phosphoribosyl-AMP. This chain is Phosphoribosyl-AMP cyclohydrolase, found in Nitrosococcus oceani (strain ATCC 19707 / BCRC 17464 / JCM 30415 / NCIMB 11848 / C-107).